Consider the following 206-residue polypeptide: Probable nicotinate-nucleotide adenylyltransferase (206 aa).

The protein belongs to the NadD family.

The enzyme catalyses nicotinate beta-D-ribonucleotide + ATP + H(+) = deamido-NAD(+) + diphosphate. It functions in the pathway cofactor biosynthesis; NAD(+) biosynthesis; deamido-NAD(+) from nicotinate D-ribonucleotide: step 1/1. Catalyzes the reversible adenylation of nicotinate mononucleotide (NaMN) to nicotinic acid adenine dinucleotide (NaAD). The protein is Probable nicotinate-nucleotide adenylyltransferase of Paenarthrobacter aurescens (strain TC1).